Consider the following 492-residue polypeptide: N-succinylglutamate 5-semialdehyde dehydrogenase (492 aa).

220–225 (GSANTG) is a binding site for NAD(+). Residues E243 and C277 contribute to the active site.

It belongs to the aldehyde dehydrogenase family. AstD subfamily.

The catalysed reaction is N-succinyl-L-glutamate 5-semialdehyde + NAD(+) + H2O = N-succinyl-L-glutamate + NADH + 2 H(+). It participates in amino-acid degradation; L-arginine degradation via AST pathway; L-glutamate and succinate from L-arginine: step 4/5. In terms of biological role, catalyzes the NAD-dependent reduction of succinylglutamate semialdehyde into succinylglutamate. In Escherichia coli (strain UTI89 / UPEC), this protein is N-succinylglutamate 5-semialdehyde dehydrogenase.